A 190-amino-acid polypeptide reads, in one-letter code: ADP-ribosylation factor-like protein 6 (190 aa).

The N-myristoyl glycine moiety is linked to residue Gly-2. Residues 24–31, Thr-50, 69–73, Gly-72, 130–133, and Ala-164 each bind GTP; these read GLDNSGKT, DMAGQ, and NKMD. Mg(2+)-binding residues include Thr-31 and Thr-50.

This sequence belongs to the small GTPase superfamily. Arf family.

It localises to the cytoplasm. This chain is ADP-ribosylation factor-like protein 6, found in Caenorhabditis briggsae.